A 277-amino-acid chain; its full sequence is Large ribosomal subunit protein uL2 (277 aa).

Residues 222–277 are disordered; sequence GVAMNPIDHPHGGGEGRTSGGRHPVTPWGKPTKGKKTRTNKSTDKFILLSRHKRKK.

This sequence belongs to the universal ribosomal protein uL2 family. Part of the 50S ribosomal subunit. Forms a bridge to the 30S subunit in the 70S ribosome.

In terms of biological role, one of the primary rRNA binding proteins. Required for association of the 30S and 50S subunits to form the 70S ribosome, for tRNA binding and peptide bond formation. It has been suggested to have peptidyltransferase activity; this is somewhat controversial. Makes several contacts with the 16S rRNA in the 70S ribosome. This Bradyrhizobium sp. (strain ORS 278) protein is Large ribosomal subunit protein uL2.